The sequence spans 471 residues: Probable anion transporter 5, chloroplastic (471 aa).

Residues 1-59 (MAASASASALQAERCLLVGVGAGPRRHRLPLRMPPPLHAPPALLLLPHRRRRRWPPAVR) constitute a chloroplast transit peptide. Residues 56-76 (PAVRASPGEGGGGGGGGGGGG) are disordered. The next 4 helical transmembrane spans lie at 62-82 (PGEGGGGGGGGGGGGGLAGAL), 103-123 (IGVVAWSLATAIIPAVAGFMP), 162-182 (VVFGGLSFGSVLGLLFAPPII), and 185-205 (LGWESVFYIFGLLGIIWCLGF). The span at 63 to 76 (GEGGGGGGGGGGGG) shows a compositional bias: gly residues. Positions 226-247 (GQSPSGSSDLISSSVSPKSSES) are disordered. A compositionally biased stretch (low complexity) spans 228-247 (SPSGSSDLISSSVSPKSSES). Helical transmembrane passes span 270 to 290 (VWAMIYAHFCGSWGHYTCLSW), 307 to 327 (AWVSVLPPLGSMIITSIAAPF), 348 to 368 (IAFLSPATFMMLSSVDLGVPP), 371 to 391 (IVAFLTSGLALSSFALSGLYC), 403 to 423 (ILLGITNTVGAVPGIVGVALT), and 435 to 455 (ISLFAPSIFFYLTGTAVWLAF).

Belongs to the major facilitator superfamily. Sodium/anion cotransporter (TC 2.A.1.14) family.

It localises to the plastid. Its subcellular location is the chloroplast membrane. In terms of biological role, probable anion transporter. The sequence is that of Probable anion transporter 5, chloroplastic (PHT4;5) from Oryza sativa subsp. japonica (Rice).